The primary structure comprises 100 residues: Urease subunit gamma (100 aa).

It belongs to the urease gamma subunit family. In terms of assembly, heterotrimer of UreA (gamma), UreB (beta) and UreC (alpha) subunits. Three heterotrimers associate to form the active enzyme.

The protein localises to the cytoplasm. The enzyme catalyses urea + 2 H2O + H(+) = hydrogencarbonate + 2 NH4(+). It participates in nitrogen metabolism; urea degradation; CO(2) and NH(3) from urea (urease route): step 1/1. The chain is Urease subunit gamma from Yersinia rohdei.